Consider the following 479-residue polypeptide: Endo-beta-1,6-galactanase (479 aa).

The first 20 residues, 1 to 20 (MRSIVLPSLALALFSQRARA), serve as a signal peptide directing secretion. The N-linked (GlcNAc...) asparagine glycan is linked to Asn89. The active-site Proton donor is the Glu210. Residue Asn271 is glycosylated (N-linked (GlcNAc...) asparagine). Catalysis depends on Glu311, which acts as the Nucleophile. Asn358 carries an N-linked (GlcNAc...) asparagine glycan.

The catalysed reaction is Endohydrolysis of (1-&gt;6)-beta-D-galactosidic linkages in arabinogalactan proteins and (1-&gt;3):(1-&gt;6)-beta-galactans to yield galactose and beta-(1-&gt;6)-galactaobiose as the final products.. Functionally, hydrolyzes galactooligomers with a degree of polymerization higher than 3. Hydrolyzes radish root arabinogalactan-protein. Does not hydrolyze dextran, arabinan, starch, laminarin, beta-1,4- and beta-1,3-galactans, larch wood arabinogalactan or acid-insoluble polygalacturonic acid. In Hypocrea rufa (Trichoderma viride), this protein is Endo-beta-1,6-galactanase.